The sequence spans 172 residues: FMN reductase (NADH) RutF 2 (172 aa).

This sequence belongs to the non-flavoprotein flavin reductase family. RutF subfamily.

It catalyses the reaction FMNH2 + NAD(+) = FMN + NADH + 2 H(+). Catalyzes the reduction of FMN to FMNH2 which is used to reduce pyrimidine by RutA via the Rut pathway. The chain is FMN reductase (NADH) RutF 2 from Methylorubrum extorquens (strain PA1) (Methylobacterium extorquens).